The sequence spans 297 residues: MSDYIYPIIAGVIAGIATRLYMLKTDYRQYPTYVHGKVIHIALGLIAAGLGAIIMPALLQEEFTAITFLTLAATQFRDVRNMERNTLTQMDSYELVSRGSTYIEGIAIAFESRNYIVIFTALLTTSAYVFLSIWAAVIAAVVCFLLAMKFMSGSVLKDIVDIEYIKPRFDGPGLFVDNIYMMNIGLPEKQELILKHGMGFILTPKNFNSAATIANLGQRQAILFDVSNVLGVYRDSGEPSLTPIAKRDLNDGRVAVFVLPQIHHPETAVQIISNVPTLENAIRMPTEFIKNQDKVIG.

4 helical membrane passes run 3 to 23 (DYIY…LYML), 38 to 58 (VIHI…MPAL), 103 to 123 (IEGI…TALL), and 128 to 148 (YVFL…LLAM).

Its subcellular location is the cell membrane. This is an uncharacterized protein from Bacillus subtilis (strain 168).